The chain runs to 74 residues: Delta-actitoxin-Amc3a (74 aa).

Positions 1 to 19 are cleaved as a signal peptide; that stretch reads MNRLIILVVAAVFLGMASA. Positions 20–24 are excised as a propeptide; that stretch reads EEDVL. P29 is modified (hydroxyproline). 3 disulfide bridges follow: C30–C70, C32–C60, and C53–C71. Q73 bears the Glutamine amide mark.

This sequence belongs to the sea anemone sodium channel inhibitory toxin family. Type I subfamily.

Its subcellular location is the secreted. The protein localises to the nematocyst. Inhibits voltage-gated sodium channels (Nav). The polypeptide is Delta-actitoxin-Amc3a (Antheopsis maculata (Sea anemone)).